Reading from the N-terminus, the 189-residue chain is Chitin synthase 1 (189 aa).

Belongs to the chitin synthase family. Class I subfamily.

The protein localises to the cell membrane. The catalysed reaction is [(1-&gt;4)-N-acetyl-beta-D-glucosaminyl](n) + UDP-N-acetyl-alpha-D-glucosamine = [(1-&gt;4)-N-acetyl-beta-D-glucosaminyl](n+1) + UDP + H(+). Its function is as follows. Polymerizes chitin, a structural polymer of the cell wall and septum, by transferring the sugar moiety of UDP-GlcNAc to the non-reducing end of the growing chitin polymer. This Ajellomyces capsulatus (Darling's disease fungus) protein is Chitin synthase 1 (CHS1).